The sequence spans 691 residues: Dynamin-1-like protein (691 aa).

The Dynamin-type G domain maps to 22–301 (IIQLPQIAVV…LMHHIRDCLP (280 aa)). The interval 32-39 (GTQSSGKS) is G1 motif. 32 to 40 (GTQSSGKSS) lines the GTP pocket. Residues 58–60 (VTR) form a G2 motif region. Residues 145-148 (DLPG) form a G3 motif region. The tract at residues 214 to 217 (TKLD) is G4 motif. Residues 214–220 (TKLDLMD) and 245–248 (NRSQ) each bind GTP. Positions 244-247 (VNRS) are G5 motif. Positions 343 to 488 (YCNTIEGTAK…NEMVHNLVAI (146 aa)) are middle domain. 2 stretches are compositionally biased toward basic and acidic residues: residues 522-531 (LPTSVPRDKM) and 551-563 (KKGDEGQGEEKTK). A disordered region spans residues 522–573 (LPTSVPRDKMAGGAQAEQEGGTGTWRGMLKKGDEGQGEEKTKLQSSIPASPQ). The region spanning 599–690 (CEVIERLIKS…VIAEIRETHL (92 aa)) is the GED domain. An important for homodimerization region spans residues 609-623 (YFLIVRKNIQDSVPK).

The protein belongs to the TRAFAC class dynamin-like GTPase superfamily. Dynamin/Fzo/YdjA family. In terms of assembly, homotetramer; dimerizes through the N-terminal GTP-middle region of one molecule binding to the GED domain of another DNM1L molecule. Oligomerizes in a GTP-dependent manner to form membrane-associated tubules with a spiral pattern.

The protein resides in the cytoplasm. It is found in the cytosol. Its subcellular location is the golgi apparatus. It localises to the endomembrane system. The protein localises to the mitochondrion outer membrane. The protein resides in the peroxisome. It is found in the membrane. Its subcellular location is the clathrin-coated pit. It localises to the cytoplasmic vesicle. The protein localises to the secretory vesicle. The protein resides in the synaptic vesicle membrane. The enzyme catalyses GTP + H2O = GDP + phosphate + H(+). Its function is as follows. Functions in mitochondrial and peroxisomal division. Mediates membrane fission through oligomerization into membrane-associated tubular structures that wrap around the scission site to constrict and sever the mitochondrial membrane through a GTP hydrolysis-dependent mechanism. The specific recruitment at scission sites is mediated by membrane receptors like MFF, MIEF1 and MIEF2 for mitochondrial membranes. While the recruitment by the membrane receptors is GTP-dependent, the following hydrolysis of GTP induces the dissociation from the receptors and allows DNM1L filaments to curl into closed rings that are probably sufficient to sever a double membrane. May play a role in the circadian control of mitochondrial ATP production. The polypeptide is Dynamin-1-like protein (Danio rerio (Zebrafish)).